The chain runs to 60 residues: Large ribosomal subunit protein bL32 (60 aa).

Residues 1-20 show a composition bias toward basic residues; sequence MAKPARHTSKAKRNKRRTHY. The segment at 1–22 is disordered; the sequence is MAKPARHTSKAKRNKRRTHYKL.

The protein belongs to the bacterial ribosomal protein bL32 family.

The chain is Large ribosomal subunit protein bL32 from Streptococcus agalactiae serotype V (strain ATCC BAA-611 / 2603 V/R).